The sequence spans 150 residues: Large ribosomal subunit protein bL9 (150 aa).

This sequence belongs to the bacterial ribosomal protein bL9 family.

Its function is as follows. Binds to the 23S rRNA. This chain is Large ribosomal subunit protein bL9, found in Mycoplasmopsis pulmonis (strain UAB CTIP) (Mycoplasma pulmonis).